Reading from the N-terminus, the 379-residue chain is Lipid-A-disaccharide synthase (379 aa).

The protein belongs to the LpxB family.

The enzyme catalyses a lipid X + a UDP-2-N,3-O-bis[(3R)-3-hydroxyacyl]-alpha-D-glucosamine = a lipid A disaccharide + UDP + H(+). It functions in the pathway bacterial outer membrane biogenesis; LPS lipid A biosynthesis. Functionally, condensation of UDP-2,3-diacylglucosamine and 2,3-diacylglucosamine-1-phosphate to form lipid A disaccharide, a precursor of lipid A, a phosphorylated glycolipid that anchors the lipopolysaccharide to the outer membrane of the cell. The sequence is that of Lipid-A-disaccharide synthase from Vibrio cholerae serotype O1 (strain ATCC 39541 / Classical Ogawa 395 / O395).